A 196-amino-acid chain; its full sequence is GTP cyclohydrolase-2 (196 aa).

49 to 53 (RIHSE) contacts GTP. Residues cysteine 54, cysteine 65, and cysteine 67 each contribute to the Zn(2+) site. Residues glutamine 70, 92-94 (EGR), and threonine 114 each bind GTP. The active-site Proton acceptor is aspartate 126. Arginine 128 (nucleophile) is an active-site residue. Residues threonine 149 and lysine 154 each contribute to the GTP site.

The protein belongs to the GTP cyclohydrolase II family. As to quaternary structure, homodimer. The cofactor is Zn(2+).

It catalyses the reaction GTP + 4 H2O = 2,5-diamino-6-hydroxy-4-(5-phosphoribosylamino)-pyrimidine + formate + 2 phosphate + 3 H(+). It functions in the pathway cofactor biosynthesis; riboflavin biosynthesis; 5-amino-6-(D-ribitylamino)uracil from GTP: step 1/4. In terms of biological role, catalyzes the conversion of GTP to 2,5-diamino-6-ribosylamino-4(3H)-pyrimidinone 5'-phosphate (DARP), formate and pyrophosphate. The chain is GTP cyclohydrolase-2 from Buchnera aphidicola subsp. Schizaphis graminum (strain Sg).